The following is a 550-amino-acid chain: Chaperonin GroEL 1 (550 aa).

ATP contacts are provided by residues threonine 30–proline 33, lysine 51, aspartate 87–threonine 91, glycine 415, and aspartate 496.

This sequence belongs to the chaperonin (HSP60) family. Forms a cylinder of 14 subunits composed of two heptameric rings stacked back-to-back. Interacts with the co-chaperonin GroES.

It is found in the cytoplasm. It catalyses the reaction ATP + H2O + a folded polypeptide = ADP + phosphate + an unfolded polypeptide.. In terms of biological role, together with its co-chaperonin GroES, plays an essential role in assisting protein folding. The GroEL-GroES system forms a nano-cage that allows encapsulation of the non-native substrate proteins and provides a physical environment optimized to promote and accelerate protein folding. The chain is Chaperonin GroEL 1 from Rhodopseudomonas palustris (strain HaA2).